The chain runs to 248 residues: DNA/RNA-binding protein ALBA1 (248 aa).

A disordered region spans residues 217 to 248 (GRDGGYRGGNRGGSRSGFRGGRGGFRGGRALS). Residues 222–248 (YRGGNRGGSRSGFRGGRGGFRGGRALS) are compositionally biased toward gly residues.

This sequence belongs to the histone-like Alba family. May form homodimers. Identified in a TARE6-associated complex consisting of over 30 proteins and including ALBA1, ALBA2 and ALBA4; the complex binds to the non-coding subtelomeric repeat region TARE6.

Its subcellular location is the nucleus. It localises to the chromosome. The protein resides in the telomere. It is found in the cytoplasm. Its function is as follows. Possesses DNA- and RNA-binding activities. During the asexual blood stages binds to a sub-population of mature mRNAs and regulates the timing of their translation. Binds to DNA with relaxed sequence specificity. Associates with the subtelomeric TARE6 repeats. In Plasmodium falciparum (isolate 3D7), this protein is DNA/RNA-binding protein ALBA1.